We begin with the raw amino-acid sequence, 107 residues long: Small ribosomal subunit protein uS10m (107 aa).

Belongs to the universal ribosomal protein uS10 family.

Its subcellular location is the mitochondrion. In Prototheca wickerhamii, this protein is Small ribosomal subunit protein uS10m (RPS10).